The sequence spans 551 residues: Chloride channel CLIC-like protein 1 (551 aa).

A signal peptide spans 1 to 18 (MLCSLLLCECLLLVAGYA). Over 19-184 (HDDDWIDPTD…EDSFGVDPYN (166 aa)) the chain is Lumenal. Residues 185–205 (VLMVLLCLLCIVVLVATELWT) form a helical membrane-spanning segment. The Cytoplasmic segment spans residues 206–216 (YVRWYTQLRRV). Residues 217–237 (LIISFLFSLGWNWMYLYKLAF) traverse the membrane as a helical segment. At 238–329 (AQHQAEVAKM…GEFIKALMKE (92 aa)) the chain is on the lumenal side. Residues 330 to 350 (IPALLHLPVLIIMALAILSFC) form a helical membrane-spanning segment. The Cytoplasmic portion of the chain corresponds to 351–551 (YGAGKSVHVL…GQDPVSSPCG (201 aa)). Residues 363–415 (IGGPESEPPQALRPRDRRRQEEIDYRPDGGAGDADFHYRGQMGPTEQGPYAKT) form a disordered region. A compositionally biased stretch (basic and acidic residues) spans 380–389 (RRQEEIDYRP). Serine 438 and serine 464 each carry phosphoserine. The segment at 447 to 551 (VPDAEAREHP…GQDPVSSPCG (105 aa)) is disordered. Position 482 is a phosphothreonine (threonine 482). Polar residues predominate over residues 488-508 (TESSQSAKPVSGQDTSGNTEG). Residues serine 509, serine 524, and serine 532 each carry the phosphoserine modification.

The protein belongs to the chloride channel MCLC family. As to quaternary structure, homomultimers. Interacts with mitochondrial protein PIGBOS1 (via C-terminus); the interaction occurs at the mitochondria-associated endoplasmic reticulum (ER) membrane, a zone of contact between the ER and mitochondrial membranes, but does not appear to play a role in ER-mitochondria tethering and is not affected by ER stress. Interacts with CALR. Expressed in the retina of the eye, with extensive expression in the lamina cribrosa, optic nerve, ganglion cell layer, inner nuclear layer, outer nuclear layer and retinal pigment epithelium.

It localises to the endoplasmic reticulum membrane. It catalyses the reaction chloride(in) = chloride(out). The enzyme catalyses bromide(in) = bromide(out). It carries out the reaction nitrate(in) = nitrate(out). The catalysed reaction is fluoride(in) = fluoride(out). With respect to regulation, inhibited by ER lumenal Ca(2+). Anion-selective channel with Ca(2+)-dependent and voltage-independent gating. Permeable to small monovalent anions with selectivity for bromide &gt; chloride &gt; nitrate &gt; fluoride. Operates in the endoplasmic reticulum (ER) membrane where it mediates chloride efflux to compensate for the loss of positive charges from the ER lumen upon Ca(2+) release. Contributes to the maintenance of ER Ca(2+) pools and activation of unfolded protein response to prevent accumulation of misfolded proteins in the ER lumen. Particularly involved in ER homeostasis mechanisms underlying motor neurons and retinal photoreceptors survival. The polypeptide is Chloride channel CLIC-like protein 1 (Homo sapiens (Human)).